We begin with the raw amino-acid sequence, 349 residues long: UDP-N-acetylenolpyruvoylglucosamine reductase (349 aa).

In terms of domain architecture, FAD-binding PCMH-type spans phenylalanine 24–arginine 197. Arginine 173 is an active-site residue. Catalysis depends on serine 249, which acts as the Proton donor. Glutamate 345 is a catalytic residue.

The protein belongs to the MurB family. FAD is required as a cofactor.

The protein resides in the cytoplasm. It carries out the reaction UDP-N-acetyl-alpha-D-muramate + NADP(+) = UDP-N-acetyl-3-O-(1-carboxyvinyl)-alpha-D-glucosamine + NADPH + H(+). It functions in the pathway cell wall biogenesis; peptidoglycan biosynthesis. Cell wall formation. The protein is UDP-N-acetylenolpyruvoylglucosamine reductase of Burkholderia ambifaria (strain ATCC BAA-244 / DSM 16087 / CCUG 44356 / LMG 19182 / AMMD) (Burkholderia cepacia (strain AMMD)).